The primary structure comprises 197 residues: Elongation factor Ts (197 aa).

Positions 81–84 (TDFV) are involved in Mg(2+) ion dislocation from EF-Tu.

The protein belongs to the EF-Ts family.

The protein resides in the cytoplasm. In terms of biological role, associates with the EF-Tu.GDP complex and induces the exchange of GDP to GTP. It remains bound to the aminoacyl-tRNA.EF-Tu.GTP complex up to the GTP hydrolysis stage on the ribosome. This is Elongation factor Ts from Petrotoga mobilis (strain DSM 10674 / SJ95).